The primary structure comprises 274 residues: Hydroxyethylthiazole kinase (274 aa).

Met-54 contributes to the substrate binding site. ATP-binding residues include Arg-129 and Thr-175. Residue Gly-202 participates in substrate binding.

This sequence belongs to the Thz kinase family. Mg(2+) is required as a cofactor.

The catalysed reaction is 5-(2-hydroxyethyl)-4-methylthiazole + ATP = 4-methyl-5-(2-phosphooxyethyl)-thiazole + ADP + H(+). The protein operates within cofactor biosynthesis; thiamine diphosphate biosynthesis; 4-methyl-5-(2-phosphoethyl)-thiazole from 5-(2-hydroxyethyl)-4-methylthiazole: step 1/1. Its function is as follows. Catalyzes the phosphorylation of the hydroxyl group of 4-methyl-5-beta-hydroxyethylthiazole (THZ). In Granulibacter bethesdensis (strain ATCC BAA-1260 / CGDNIH1), this protein is Hydroxyethylthiazole kinase.